Here is a 169-residue protein sequence, read N- to C-terminus: Neurotensin/neuromedin N (169 aa).

The signal sequence occupies residues 1-22 (MRGMNLQLVCLTLLAFSSWSLC).

The protein belongs to the neurotensin family. In terms of assembly, interacts with NTSR1. Interacts with SORT1. Interacts with SORL1. Post-translationally, neurotensin is cleaved and degraded by Angiotensin-converting enzyme (ACE) and neprilysin (MME).

It localises to the secreted. The protein resides in the cytoplasmic vesicle. It is found in the secretory vesicle. Neurotensin may play an endocrine or paracrine role in the regulation of fat metabolism. It causes contraction of smooth muscle. This chain is Neurotensin/neuromedin N (Nts), found in Mus musculus (Mouse).